Here is a 452-residue protein sequence, read N- to C-terminus: Elongation factor Tu, mitochondrial (452 aa).

The N-terminal 43 residues, 1-43 (MAAATLLRATPRFSGLCASPTPFLQGRLRPLKAPASPFLCRGL), are a transit peptide targeting the mitochondrion. Residues 55 to 251 (KPHVNVGTIG…AVDTYIPVPT (197 aa)) form the tr-type G domain. The segment at 64–71 (GHVDHGKT) is G1. GTP is bound by residues Asp67, Gly69, Lys70, Thr71, and Thr72. Thr71 contributes to the Mg(2+) binding site. Residue Lys79 is modified to N6-acetyllysine. Lys88 is subject to N6-acetyllysine; alternate. The residue at position 88 (Lys88) is an N6-succinyllysine; alternate. A G2 region spans residues 105 to 109 (GITIN). The tract at residues 126 to 129 (DCPG) is G3. 5 residues coordinate GTP: Asn181, Asp184, Ser219, Ala220, and Leu221. The tract at residues 181–184 (NKAD) is G4. The tract at residues 219-221 (SAL) is G5. N6-succinyllysine is present on Lys234. Lys256 is subject to N6-acetyllysine. Thr278 bears the Phosphothreonine mark. Lys286 bears the N6-succinyllysine mark. Ser312 bears the Phosphoserine mark. N6-acetyllysine occurs at positions 361 and 418.

This sequence belongs to the TRAFAC class translation factor GTPase superfamily. Classic translation factor GTPase family. EF-Tu/EF-1A subfamily. Interacts with NLRX1. Interacts with ATG16L1.

Its subcellular location is the mitochondrion. It catalyses the reaction GTP + H2O = GDP + phosphate + H(+). In terms of biological role, GTP hydrolase that promotes the GTP-dependent binding of aminoacyl-tRNA to the A-site of ribosomes during protein biosynthesis. Plays a role in the regulation of autophagy and innate immunity. Recruits ATG5-ATG12 and NLRX1 at mitochondria and serves as a checkpoint of the RIGI-MAVS pathway. In turn, inhibits RLR-mediated type I interferon while promoting autophagy. The polypeptide is Elongation factor Tu, mitochondrial (Rattus norvegicus (Rat)).